A 906-amino-acid chain; its full sequence is UPF0182 protein CA_C0010 (906 aa).

A run of 7 helical transmembrane segments spans residues 7-29 (IVTI…DFII), 47-69 (LAAI…WFYY), 96-118 (VAIV…VYWY), 153-175 (LYGV…YIVL), 208-230 (FAII…SFNL), 250-272 (LVFY…TSII), and 279-301 (IFVS…EIVQ). Residues 842–862 (NSSNNQSETRTETGGTSTDSS) show a composition bias toward low complexity. A disordered region spans residues 842–875 (NSSNNQSETRTETGGTSTDSSNNKDKLKQAQDLY).

The protein belongs to the UPF0182 family.

It is found in the cell membrane. The sequence is that of UPF0182 protein CA_C0010 from Clostridium acetobutylicum (strain ATCC 824 / DSM 792 / JCM 1419 / IAM 19013 / LMG 5710 / NBRC 13948 / NRRL B-527 / VKM B-1787 / 2291 / W).